A 260-amino-acid chain; its full sequence is DNA-directed RNA polymerase subunit Rpo3 (260 aa).

This sequence belongs to the archaeal Rpo3/eukaryotic RPB3 RNA polymerase subunit family. Part of the RNA polymerase complex.

It is found in the cytoplasm. It carries out the reaction RNA(n) + a ribonucleoside 5'-triphosphate = RNA(n+1) + diphosphate. In terms of biological role, DNA-dependent RNA polymerase (RNAP) catalyzes the transcription of DNA into RNA using the four ribonucleoside triphosphates as substrates. This is DNA-directed RNA polymerase subunit Rpo3 from Pyrobaculum aerophilum (strain ATCC 51768 / DSM 7523 / JCM 9630 / CIP 104966 / NBRC 100827 / IM2).